A 135-amino-acid chain; its full sequence is MAQTSLEIVSPEKRLLSRSVDMVVIPAAEGELGVLPGHAPMIVLLQGGTIRLYQNGQVTDRLYVAGGFAEITPERCTVLADQARPVAEISATEAEKRLADAEAAYATVDKLDITALDAAMESIQAARAMVEAARH.

This sequence belongs to the ATPase epsilon chain family. As to quaternary structure, F-type ATPases have 2 components, CF(1) - the catalytic core - and CF(0) - the membrane proton channel. CF(1) has five subunits: alpha(3), beta(3), gamma(1), delta(1), epsilon(1). CF(0) has three main subunits: a, b and c.

The protein resides in the cell inner membrane. Its function is as follows. Produces ATP from ADP in the presence of a proton gradient across the membrane. The protein is ATP synthase epsilon chain of Granulibacter bethesdensis (strain ATCC BAA-1260 / CGDNIH1).